The chain runs to 1081 residues: Teashirt homolog 3 (1081 aa).

3 disordered regions span residues 25–104, 141–161, and 238–257; these read LVED…EVQV, PSSE…SSCG, and HYRD…WSKP. Positions 26–37 are enriched in acidic residues; it reads VEDDVEPEEQAA. Residues 68-87 are compositionally biased toward basic and acidic residues; sequence SSHEMDSESHISETSDRMAD. 2 consecutive C2H2-type zinc fingers follow at residues 214–238 and 275–299; these read FRCK…ETGH and LKCM…KTKH. Basic and acidic residues predominate over residues 238–247; that stretch reads HYRDDNHETD. Residues 325–346 form a disordered region; it reads SLELELPSSPDSTGGTPKATLS. Residues 387 to 410 form a C2H2-type 3; atypical zinc finger; that stretch reads KCMECGSSHDTLQELTAHMMVTGH. Over residues 474 to 491 the composition is skewed to basic and acidic residues; it reads VDKEKAVPDEKPKEREKP. Disordered stretches follow at residues 474–499, 626–699, 792–824, and 855–897; these read VDKE…EKYD, EKMK…KPLS, LTKG…TVTT, and TESH…RQSN. Residues 606–630 are a coiled coil; sequence NFHAMEELVKKVTEKVAKVEEKMKE. The segment covering 660 to 670 has biased composition (polar residues); the sequence is SDGSFKSQENS. A Phosphoserine modification is found at Ser-682. Composition is skewed to low complexity over residues 800-824 and 856-869; these read GCSL…TVTT and ESHT…SSIS. Positions 891–961 form a DNA-binding region, homeobox; atypical; it reads RKGRQSNWNP…NVKYQLRRTG (71 aa). 2 C2H2-type zinc fingers span residues 976-998 and 1041-1064; these read FFCN…LESH and YQCK…SKTH.

Belongs to the teashirt C2H2-type zinc-finger protein family. As to quaternary structure, interacts (via N-terminus) with HDAC1 and HDAC2; the interaction is direct. Found in a trimeric complex with APBB1 and HDAC1; the interaction between HDAC1 and APBB1 is mediated by TSHZ3. Interacts (via homeobox domain) with APBB1 (via PID domain 1). In terms of tissue distribution, expressed in corticostriatal neurons.

Its subcellular location is the nucleus. The protein resides in the cell projection. The protein localises to the growth cone. Transcriptional regulator involved in developmental processes. Functions in association with APBB1, SET and HDAC factors as a transcriptional repressor, that inhibits the expression of CASP4. TSHZ3-mediated transcription repression involves the recruitment of histone deacetylases HDAC1 and HDAC2. Associates with chromatin in a region surrounding the CASP4 transcriptional start site(s). Regulates the development of neurons involved in both respiratory rhythm and airflow control. Promotes maintenance of nucleus ambiguus (nA) motoneurons, which govern upper airway function, and establishes a respiratory rhythm generator (RRG) activity compatible with survival at birth. Involved in the differentiation of the proximal uretic smooth muscle cells during developmental processes. Involved in the up-regulation of myocardin, that directs the expression of smooth muscle cells in the proximal ureter. Involved in the modulation of glutamatergic synaptic transmission and long-term synaptic potentiation. In Mus musculus (Mouse), this protein is Teashirt homolog 3 (Tshz3).